The sequence spans 345 residues: uncharacterized protein (345 aa).

Belongs to the Gfo/Idh/MocA family. Biliverdin reductase subfamily.

This is an uncharacterized protein from Escherichia coli (strain K12).